The following is a 711-amino-acid chain: Mitochondrial intermediate peptidase (711 aa).

A mitochondrion-targeting transit peptide spans methionine 1–aspartate 33. Residue lysine 124 is modified to N6-acetyllysine. A Zn(2+)-binding site is contributed by histidine 493. The active site involves glutamate 494. 2 residues coordinate Zn(2+): histidine 497 and histidine 500.

This sequence belongs to the peptidase M3 family. In terms of assembly, monomer. It depends on Zn(2+) as a cofactor.

It is found in the mitochondrion matrix. It carries out the reaction Release of an N-terminal octapeptide as second stage of processing of some proteins imported into the mitochondrion.. Activity is divalent cation-dependent. It is stimulated by manganese, magnesium or calcium ions and reversibly inhibited by zinc, cobalt and iron. Its function is as follows. Cleaves proteins, imported into the mitochondrion, to their mature size. The chain is Mitochondrial intermediate peptidase (Mipep) from Mus musculus (Mouse).